The primary structure comprises 183 residues: uncharacterized protein (183 aa).

4 helical membrane-spanning segments follow: residues 13–35 (KALL…LTYS), 60–82 (LLIL…KLRF), 117–139 (FEPV…YAIF), and 149–171 (LLFY…LYLS).

Its subcellular location is the cell membrane. This is an uncharacterized protein from Archaeoglobus fulgidus (strain ATCC 49558 / DSM 4304 / JCM 9628 / NBRC 100126 / VC-16).